The chain runs to 224 residues: UPF0758 protein AFE_0358 (224 aa).

The MPN domain occupies 102–224 (GLDSPLRVRQ…PLSLREQGGW (123 aa)). His173, His175, and Asp186 together coordinate Zn(2+). The JAMM motif motif lies at 173-186 (HNHPSGVAEPSAAD).

It belongs to the UPF0758 family.

This Acidithiobacillus ferrooxidans (strain ATCC 23270 / DSM 14882 / CIP 104768 / NCIMB 8455) (Ferrobacillus ferrooxidans (strain ATCC 23270)) protein is UPF0758 protein AFE_0358.